Here is a 587-residue protein sequence, read N- to C-terminus: MAPIKEFISKFSDFKNNKKLILSSAAIALLLLASIVGIAATTTNQNKNQKITTLSSTSHAILKSVCSSTLYPELCFSAVAATGGKELTSQKEVIEASLNLTTKAVKHNYFAVKKLIAKRKGLTPREVTALHDCLETIDETLDELHVAVEDLHQYPKQKSLRKHADDLKTLISSAITNQGTCLDGFSYDDADRKVRKALLKGQVHVEHMCSNALAMIKNMTETDIANFELRDKSSTFTNNNNRKLKEVTGDLDSDGWPKWLSVGDRRLLQGSTIKADATVADDGSGDFTTVAAAVAAAPEKSNKRFVIHIKAGVYRENVEVTKKKTNIMFLGDGRGKTIITGSRNVVDGSTTFHSATVAAVGERFLARDITFQNTAGPSKHQAVALRVGSDFSAFYQCDMFAYQDTLYVHSNRQFFVKCHITGTVDFIFGNAAAVLQDCDINARRPNSGQKNMVTAQGRSDPNQNTGIVIQNCRIGGTSDLLAVKGTFPTYLGRPWKEYSRTVIMQSDISDVIRPEGWHEWSGSFALDTLTYREYLNRGGGAGTANRVKWKGYKVITSDTEAQPFTAGQFIGGGGWLASTGFPFSLSL.

The first 40 residues, 1–40 (MAPIKEFISKFSDFKNNKKLILSSAAIALLLLASIVGIAA), serve as a signal peptide directing secretion. Asn-99 and Asn-218 each carry an N-linked (GlcNAc...) asparagine glycan. Substrate is bound by residues Thr-351 and Gln-381. Asp-404 serves as the catalytic Proton donor. Cys-418 and Cys-438 are disulfide-bonded. Asp-425 (nucleophile) is an active-site residue. Substrate is bound by residues Arg-493 and Trp-495.

This sequence in the N-terminal section; belongs to the PMEI family. In the C-terminal section; belongs to the pectinesterase family. Expressed in flower buds.

Its subcellular location is the secreted. The protein resides in the cell wall. It carries out the reaction [(1-&gt;4)-alpha-D-galacturonosyl methyl ester](n) + n H2O = [(1-&gt;4)-alpha-D-galacturonosyl](n) + n methanol + n H(+). The protein operates within glycan metabolism; pectin degradation; 2-dehydro-3-deoxy-D-gluconate from pectin: step 1/5. Functionally, acts in the modification of cell walls via demethylesterification of cell wall pectin. This chain is Pectinesterase 2 (PME2), found in Arabidopsis thaliana (Mouse-ear cress).